Consider the following 156-residue polypeptide: Small ribosomal subunit protein uS7 (156 aa).

It belongs to the universal ribosomal protein uS7 family. In terms of assembly, part of the 30S ribosomal subunit. Contacts proteins S9 and S11.

Functionally, one of the primary rRNA binding proteins, it binds directly to 16S rRNA where it nucleates assembly of the head domain of the 30S subunit. Is located at the subunit interface close to the decoding center, probably blocks exit of the E-site tRNA. In Mesomycoplasma hyopneumoniae (strain 232) (Mycoplasma hyopneumoniae), this protein is Small ribosomal subunit protein uS7.